A 302-amino-acid chain; its full sequence is Protein TILLER ANGLE CONTROL 1 (302 aa).

The short motif at 57 to 63 (GILTIGT) is the IGT motif element. Disordered regions lie at residues 82–115 (ESEE…VEDE) and 159–180 (EGSS…KNKK). The segment covering 99–115 (DDDDDDDEHYDHSVEDE) has biased composition (acidic residues). Polar residues predominate over residues 162 to 175 (SEISTKPDQSANDQ).

It belongs to the TAC family. In terms of tissue distribution, highly expressed in flower buds. Expressed in branch attachment sites, vegetative buds and young fruits.

Involved in the regulation of axillary shoot growth angle. Promotes horizontal shoot growth. This chain is Protein TILLER ANGLE CONTROL 1, found in Prunus persica (Peach).